We begin with the raw amino-acid sequence, 325 residues long: GMP reductase (325 aa).

The Thioimidate intermediate role is filled by cysteine 174. 203–226 (IIADGGIRTNGDIAKSIRFGANMV) contacts NADP(+).

Belongs to the IMPDH/GMPR family. GuaC type 2 subfamily.

The enzyme catalyses IMP + NH4(+) + NADP(+) = GMP + NADPH + 2 H(+). Functionally, catalyzes the irreversible NADPH-dependent deamination of GMP to IMP. It functions in the conversion of nucleobase, nucleoside and nucleotide derivatives of G to A nucleotides, and in maintaining the intracellular balance of A and G nucleotides. The protein is GMP reductase of Latilactobacillus sakei subsp. sakei (strain 23K) (Lactobacillus sakei subsp. sakei).